The chain runs to 327 residues: Protein-L-isoaspartate O-methyltransferase (327 aa).

Disordered stretches follow at residues 1-38 (MSGERAKRFPLALEDLKREPRKPEGRAAERQAAGDAAR) and 62-105 (PRAA…KSAT). Positions 14-29 (EDLKREPRKPEGRAAE) are enriched in basic and acidic residues. Positions 62-77 (PRAAGASGSGVPVAKP) are enriched in low complexity. The segment covering 92 to 105 (APSSGVKNGDKSAT) has biased composition (polar residues). The active site involves Ser175.

The protein belongs to the methyltransferase superfamily. L-isoaspartyl/D-aspartyl protein methyltransferase family.

Its subcellular location is the cytoplasm. The catalysed reaction is [protein]-L-isoaspartate + S-adenosyl-L-methionine = [protein]-L-isoaspartate alpha-methyl ester + S-adenosyl-L-homocysteine. In terms of biological role, catalyzes the methyl esterification of L-isoaspartyl residues in peptides and proteins that result from spontaneous decomposition of normal L-aspartyl and L-asparaginyl residues. It plays a role in the repair and/or degradation of damaged proteins. This chain is Protein-L-isoaspartate O-methyltransferase, found in Burkholderia thailandensis (strain ATCC 700388 / DSM 13276 / CCUG 48851 / CIP 106301 / E264).